A 178-amino-acid polypeptide reads, in one-letter code: Protein GrpE (178 aa).

Positions 1-22 (MSENQNPSPSPEEIEAAMSANA) are disordered.

This sequence belongs to the GrpE family. Homodimer.

It is found in the cytoplasm. Functionally, participates actively in the response to hyperosmotic and heat shock by preventing the aggregation of stress-denatured proteins, in association with DnaK and GrpE. It is the nucleotide exchange factor for DnaK and may function as a thermosensor. Unfolded proteins bind initially to DnaJ; upon interaction with the DnaJ-bound protein, DnaK hydrolyzes its bound ATP, resulting in the formation of a stable complex. GrpE releases ADP from DnaK; ATP binding to DnaK triggers the release of the substrate protein, thus completing the reaction cycle. Several rounds of ATP-dependent interactions between DnaJ, DnaK and GrpE are required for fully efficient folding. The chain is Protein GrpE from Acidovorax ebreus (strain TPSY) (Diaphorobacter sp. (strain TPSY)).